A 663-amino-acid chain; its full sequence is Glucans biosynthesis glucosyltransferase H (663 aa).

6 helical membrane-spanning segments follow: residues 64–86 (WMLG…DTIA), 101–123 (LAPL…VVLM), 413–435 (LVIG…AGLI), 470–492 (AWAM…ILVL), 558–580 (EAWA…FWFT), and 584–606 (LTAT…LGAH).

Belongs to the glycosyltransferase 2 family. OpgH subfamily.

It is found in the cell inner membrane. The protein operates within glycan metabolism; osmoregulated periplasmic glucan (OPG) biosynthesis. In terms of biological role, involved in the biosynthesis of osmoregulated periplasmic glucans (OPGs). The protein is Glucans biosynthesis glucosyltransferase H of Caulobacter vibrioides (strain ATCC 19089 / CIP 103742 / CB 15) (Caulobacter crescentus).